The following is a 552-amino-acid chain: Formate--tetrahydrofolate ligase (552 aa).

65 to 72 (TPAGEGKT) provides a ligand contact to ATP.

Belongs to the formate--tetrahydrofolate ligase family.

The catalysed reaction is (6S)-5,6,7,8-tetrahydrofolate + formate + ATP = (6R)-10-formyltetrahydrofolate + ADP + phosphate. Its pathway is one-carbon metabolism; tetrahydrofolate interconversion. The sequence is that of Formate--tetrahydrofolate ligase from Fervidobacterium nodosum (strain ATCC 35602 / DSM 5306 / Rt17-B1).